The primary structure comprises 657 residues: uncharacterized protein (657 aa).

Residues 1–17 form the signal peptide; sequence MACVLACVAVLIGAASA.

This is an uncharacterized protein from Orgyia pseudotsugata (Douglas-fir tussock moth).